A 366-amino-acid chain; its full sequence is Ferrochelatase (366 aa).

2 residues coordinate Fe cation: histidine 210 and glutamate 293.

Belongs to the ferrochelatase family.

Its subcellular location is the cytoplasm. It carries out the reaction heme b + 2 H(+) = protoporphyrin IX + Fe(2+). The protein operates within porphyrin-containing compound metabolism; protoheme biosynthesis; protoheme from protoporphyrin-IX: step 1/1. Its function is as follows. Catalyzes the ferrous insertion into protoporphyrin IX. This Leptospira borgpetersenii serovar Hardjo-bovis (strain JB197) protein is Ferrochelatase.